The primary structure comprises 227 residues: Orotidine 5'-phosphate decarboxylase (227 aa).

Residues D8, K30, 59 to 68 (DLKLYDIPYT), T118, R178, Q187, G207, and R208 contribute to the substrate site. K61 serves as the catalytic Proton donor.

It belongs to the OMP decarboxylase family. Type 1 subfamily. As to quaternary structure, homodimer.

It carries out the reaction orotidine 5'-phosphate + H(+) = UMP + CO2. It participates in pyrimidine metabolism; UMP biosynthesis via de novo pathway; UMP from orotate: step 2/2. Catalyzes the decarboxylation of orotidine 5'-monophosphate (OMP) to uridine 5'-monophosphate (UMP). In Helicobacter pylori (strain J99 / ATCC 700824) (Campylobacter pylori J99), this protein is Orotidine 5'-phosphate decarboxylase.